Consider the following 1407-residue polypeptide: ABC transporter B family member 6 (1407 aa).

Positions 18 to 65 (LTPVSEVSEPPESPSPYLDPGAEHGGTGTAAQADDEEEMEEPEEMEPP) are disordered. Residues 50–63 (ADDEEEMEEPEEME) show a composition bias toward acidic residues. A run of 4 helical transmembrane segments spans residues 84-104 (VLMV…IVYL), 139-159 (IVYI…CWIL), 212-231 (VGNY…IGFV), and 236-258 (IALI…NIFL). In terms of domain architecture, ABC transmembrane type-1 1 spans 86–379 (MVFGSVAAAA…AATNFYSFDQ (294 aa)). Residue asparagine 291 is glycosylated (N-linked (GlcNAc...) asparagine). The next 2 membrane-spanning stretches (helical) occupy residues 310–330 (GILI…LAIC) and 351–371 (GEII…NQAA). Residues 412–647 (IEFRNVYFSY…GNLYAELLKC (236 aa)) form the ABC transporter 1 domain. Residue 447–454 (GRNGSGKS) coordinates ATP. N-linked (GlcNAc...) asparagine glycans are attached at residues asparagine 449 and asparagine 663. 2 disordered regions span residues 670 to 696 (AERD…SLQR) and 709 to 815 (NSEE…DGQH). Residue asparagine 727 is glycosylated (N-linked (GlcNAc...) asparagine). A compositionally biased stretch (basic and acidic residues) spans 733-755 (VGEKEPTIKRQDSFEMRLPELPK). Over residues 761–770 (PQRQKSNGSD) the composition is skewed to polar residues. Residue asparagine 767 is glycosylated (N-linked (GlcNAc...) asparagine). In terms of domain architecture, ABC transmembrane type-1 2 spans 835-1123 (AVLGSIGAAI…PFGLAPYILK (289 aa)). Helical transmembrane passes span 840 to 860 (IGAA…ALVV), 880 to 900 (LIIA…HFYF), 958 to 978 (IFIQ…LLGW), 982 to 1002 (LVAL…KLWL), 1061 to 1081 (IGFA…LLLW), and 1102 to 1122 (MVFS…PYIL). Residues 1158–1395 (IELKNIDFCY…NGLYVRLMQP (238 aa)) form the ABC transporter 2 domain. N-linked (GlcNAc...) asparagine glycosylation is present at asparagine 1178. 1193–1200 (GVSGSGKS) contacts ATP. N-linked (GlcNAc...) asparagine glycosylation is found at asparagine 1260 and asparagine 1346.

It belongs to the ABC transporter superfamily. ABCB family. Multidrug resistance exporter (TC 3.A.1.201) subfamily. In terms of tissue distribution, expressed in aerial tissues.

The protein localises to the membrane. The catalysed reaction is (indol-3-yl)acetate(in) + ATP + H2O = (indol-3-yl)acetate(out) + ADP + phosphate + H(+). In terms of biological role, probable auxin efflux transporter that contributes, together with ABCB20 and in a FKBP42/TWD1-dependent manner, to the regulation of leaf position and morphology, internode distribution, roots development, and inflorescence organization, probably by modulating auxin repartition. This chain is ABC transporter B family member 6, found in Arabidopsis thaliana (Mouse-ear cress).